A 363-amino-acid polypeptide reads, in one-letter code: Methylthioribose-1-phosphate isomerase (363 aa).

D253 (proton donor) is an active-site residue.

It belongs to the eIF-2B alpha/beta/delta subunits family. MtnA subfamily.

It is found in the cytoplasm. Its subcellular location is the nucleus. The enzyme catalyses 5-(methylsulfanyl)-alpha-D-ribose 1-phosphate = 5-(methylsulfanyl)-D-ribulose 1-phosphate. It participates in amino-acid biosynthesis; L-methionine biosynthesis via salvage pathway; L-methionine from S-methyl-5-thio-alpha-D-ribose 1-phosphate: step 1/6. Functionally, catalyzes the interconversion of methylthioribose-1-phosphate (MTR-1-P) into methylthioribulose-1-phosphate (MTRu-1-P). In Drosophila grimshawi (Hawaiian fruit fly), this protein is Methylthioribose-1-phosphate isomerase.